We begin with the raw amino-acid sequence, 162 residues long: NADH-quinone oxidoreductase subunit I (162 aa).

4Fe-4S ferredoxin-type domains lie at Leu-52–Gly-82 and Thr-93–Asn-122. Residues Cys-62, Cys-65, Cys-68, Cys-72, Cys-102, Cys-105, Cys-108, and Cys-112 each coordinate [4Fe-4S] cluster.

It belongs to the complex I 23 kDa subunit family. As to quaternary structure, NDH-1 is composed of 14 different subunits. Subunits NuoA, H, J, K, L, M, N constitute the membrane sector of the complex. [4Fe-4S] cluster is required as a cofactor.

It localises to the cell inner membrane. The enzyme catalyses a quinone + NADH + 5 H(+)(in) = a quinol + NAD(+) + 4 H(+)(out). Its function is as follows. NDH-1 shuttles electrons from NADH, via FMN and iron-sulfur (Fe-S) centers, to quinones in the respiratory chain. The immediate electron acceptor for the enzyme in this species is believed to be ubiquinone. Couples the redox reaction to proton translocation (for every two electrons transferred, four hydrogen ions are translocated across the cytoplasmic membrane), and thus conserves the redox energy in a proton gradient. This Methylobacterium nodulans (strain LMG 21967 / CNCM I-2342 / ORS 2060) protein is NADH-quinone oxidoreductase subunit I.